Here is a 478-residue protein sequence, read N- to C-terminus: Adenylosuccinate lyase (478 aa).

Substrate-binding positions include 14–15 (RY), 81–83 (KHD), and 107–108 (TS). The Proton donor/acceptor role is filled by His-155. Gln-237 serves as a coordination point for substrate. Ser-285 acts as the Proton donor/acceptor in catalysis. Residues Arg-299, Arg-325, Ser-330, and Arg-334 each contribute to the substrate site.

This sequence belongs to the lyase 1 family. Adenylosuccinate lyase subfamily. In terms of assembly, homotetramer. Residues from neighboring subunits contribute catalytic and substrate-binding residues to each active site.

The enzyme catalyses N(6)-(1,2-dicarboxyethyl)-AMP = fumarate + AMP. It carries out the reaction (2S)-2-[5-amino-1-(5-phospho-beta-D-ribosyl)imidazole-4-carboxamido]succinate = 5-amino-1-(5-phospho-beta-D-ribosyl)imidazole-4-carboxamide + fumarate. It functions in the pathway purine metabolism; AMP biosynthesis via de novo pathway; AMP from IMP: step 2/2. The protein operates within purine metabolism; IMP biosynthesis via de novo pathway; 5-amino-1-(5-phospho-D-ribosyl)imidazole-4-carboxamide from 5-amino-1-(5-phospho-D-ribosyl)imidazole-4-carboxylate: step 2/2. Catalyzes two non-sequential steps in de novo AMP synthesis: converts (S)-2-(5-amino-1-(5-phospho-D-ribosyl)imidazole-4-carboxamido)succinate (SAICAR) to fumarate plus 5-amino-1-(5-phospho-D-ribosyl)imidazole-4-carboxamide, and thereby also contributes to de novo IMP synthesis, and converts succinyladenosine monophosphate (SAMP) to AMP and fumarate. This is Adenylosuccinate lyase from Caenorhabditis briggsae.